A 421-amino-acid chain; its full sequence is Medium-chain specific acyl-CoA dehydrogenase, mitochondrial (421 aa).

A mitochondrion-targeting transit peptide spans 1–25 (MAAALRRGYKVLRSVSHFECRAQHT). K69 carries the N6-acetyllysine; alternate modification. Residue K69 is modified to N6-succinyllysine; alternate. N6-acetyllysine is present on K79. An FAD-binding site is contributed by 158-167 (YCVTEPSAGS). S167 provides a ligand contact to octanoyl-CoA. K179 is subject to N6-succinyllysine. FAD is bound at residue 191–193 (WIT). K212 carries the post-translational modification N6-acetyllysine; alternate. K212 is modified (N6-succinyllysine; alternate). S216 serves as a coordination point for octanoyl-CoA. K217, K259, and K271 each carry N6-acetyllysine; alternate. K217, K259, and K271 each carry N6-succinyllysine; alternate. Octanoyl-CoA contacts are provided by D278 and R281. At K301 the chain carries N6-acetyllysine. FAD contacts are provided by residues 306-308 (RKT) and 316-317 (HQ). Octanoyl-CoA-binding residues include R349 and T351. A Phosphothreonine modification is found at T351. An FAD-binding site is contributed by 374–378 (QIFGG). E401 contacts octanoyl-CoA. Residue E401 is the Proton acceptor of the active site. 402–405 (GTAQ) provides a ligand contact to FAD.

The protein belongs to the acyl-CoA dehydrogenase family. In terms of assembly, homotetramer. Interacts with the heterodimeric electron transfer flavoprotein ETF. FAD serves as cofactor. Post-translationally, acetylated. Could occur at proximity of the cofactor-binding sites and reduce the catalytic activity. Could be deacetylated by SIRT3.

It localises to the mitochondrion matrix. The enzyme catalyses a medium-chain 2,3-saturated fatty acyl-CoA + oxidized [electron-transfer flavoprotein] + H(+) = a medium-chain (2E)-enoyl-CoA + reduced [electron-transfer flavoprotein]. The catalysed reaction is pentanoyl-CoA + oxidized [electron-transfer flavoprotein] + H(+) = (2E)-pentenoyl-CoA + reduced [electron-transfer flavoprotein]. It carries out the reaction hexanoyl-CoA + oxidized [electron-transfer flavoprotein] + H(+) = (2E)-hexenoyl-CoA + reduced [electron-transfer flavoprotein]. It catalyses the reaction octanoyl-CoA + oxidized [electron-transfer flavoprotein] + H(+) = (2E)-octenoyl-CoA + reduced [electron-transfer flavoprotein]. The enzyme catalyses decanoyl-CoA + oxidized [electron-transfer flavoprotein] + H(+) = (2E)-decenoyl-CoA + reduced [electron-transfer flavoprotein]. The catalysed reaction is dodecanoyl-CoA + oxidized [electron-transfer flavoprotein] + H(+) = (2E)-dodecenoyl-CoA + reduced [electron-transfer flavoprotein]. It carries out the reaction tetradecanoyl-CoA + oxidized [electron-transfer flavoprotein] + H(+) = (2E)-tetradecenoyl-CoA + reduced [electron-transfer flavoprotein]. It catalyses the reaction oxidized [electron-transfer flavoprotein] + hexadecanoyl-CoA + H(+) = (2E)-hexadecenoyl-CoA + reduced [electron-transfer flavoprotein]. Its pathway is lipid metabolism; mitochondrial fatty acid beta-oxidation. Functionally, medium-chain specific acyl-CoA dehydrogenase is one of the acyl-CoA dehydrogenases that catalyze the first step of mitochondrial fatty acid beta-oxidation, an aerobic process breaking down fatty acids into acetyl-CoA and allowing the production of energy from fats. The first step of fatty acid beta-oxidation consists in the removal of one hydrogen from C-2 and C-3 of the straight-chain fatty acyl-CoA thioester, resulting in the formation of trans-2-enoyl-CoA. Electron transfer flavoprotein (ETF) is the electron acceptor that transfers electrons to the main mitochondrial respiratory chain via ETF-ubiquinone oxidoreductase (ETF dehydrogenase). Among the different mitochondrial acyl-CoA dehydrogenases, medium-chain specific acyl-CoA dehydrogenase acts specifically on acyl-CoAs with saturated 6 to 12 carbons long primary chains. This Rattus norvegicus (Rat) protein is Medium-chain specific acyl-CoA dehydrogenase, mitochondrial.